The primary structure comprises 344 residues: Acireductone dioxygenase (344 aa).

Histidine 92, histidine 94, glutamate 98, and histidine 137 together coordinate Fe(2+). Ni(2+)-binding residues include histidine 92, histidine 94, glutamate 98, and histidine 137.

The protein belongs to the acireductone dioxygenase (ARD) family. Fe(2+) serves as cofactor. Ni(2+) is required as a cofactor.

It is found in the cytoplasm. Its subcellular location is the nucleus. The catalysed reaction is 1,2-dihydroxy-5-(methylsulfanyl)pent-1-en-3-one + O2 = 4-methylsulfanyl-2-oxobutanoate + formate + 2 H(+). It carries out the reaction 1,2-dihydroxy-5-(methylsulfanyl)pent-1-en-3-one + O2 = 3-(methylsulfanyl)propanoate + CO + formate + 2 H(+). It participates in amino-acid biosynthesis; L-methionine biosynthesis via salvage pathway; L-methionine from S-methyl-5-thio-alpha-D-ribose 1-phosphate: step 5/6. Catalyzes 2 different reactions between oxygen and the acireductone 1,2-dihydroxy-3-keto-5-methylthiopentene (DHK-MTPene) depending upon the metal bound in the active site. Fe-containing acireductone dioxygenase (Fe-ARD) produces formate and 2-keto-4-methylthiobutyrate (KMTB), the alpha-ketoacid precursor of methionine in the methionine recycle pathway. Ni-containing acireductone dioxygenase (Ni-ARD) produces methylthiopropionate, carbon monoxide and formate, and does not lie on the methionine recycle pathway. The polypeptide is Acireductone dioxygenase (Leishmania braziliensis).